A 258-amino-acid chain; its full sequence is Gamma carbonic anhydrase 3, mitochondrial (258 aa).

The transit peptide at 1 to 43 (MGTMGKAFYSVGFWIRETGQALDRLGCRLQGKNHFREQLSRHR) directs the protein to the mitochondrion. Substrate is bound by residues 86 to 88 (RGD) and 101 to 102 (QD). Zn(2+)-binding residues include H107, H130, and H135. Residue N209 participates in substrate binding.

Belongs to the gamma-class carbonic anhydrase family. Homotrimer. Component of the oxidoreductase respiratory chain complex I; element of the extra matrix-exposed domain, which is attached to the membrane arm of this complex. The cofactor is Zn(2+).

The protein resides in the mitochondrion membrane. Enzyme involved in the catabolism of H(2)CO(3) but that does not mediates the reversible hydration of carbon dioxide. Mediates complex I assembly in mitochondria and respiration. This Arabidopsis thaliana (Mouse-ear cress) protein is Gamma carbonic anhydrase 3, mitochondrial (GAMMACA3).